A 64-amino-acid chain; its full sequence is Large ribosomal subunit protein bL28 (64 aa).

Belongs to the bacterial ribosomal protein bL28 family.

The sequence is that of Large ribosomal subunit protein bL28 from Campylobacter jejuni subsp. jejuni serotype O:6 (strain 81116 / NCTC 11828).